The following is a 399-amino-acid chain: Calsequestrin-2 (399 aa).

The signal sequence occupies residues 1–19 (MKRTHLFIVGIYFLSSCRA). Phosphotyrosine is present on Y282. N335 carries N-linked (GlcNAc...) asparagine glycosylation. Residues 365 to 399 (VLSGKINTEDDDEDDDDDDNSDEEDNDDSDDDDDE) are disordered. The segment covering 373–399 (EDDDEDDDDDDNSDEEDNDDSDDDDDE) has biased composition (acidic residues). S385 and S393 each carry phosphoserine.

This sequence belongs to the calsequestrin family. Monomer, homodimer and homooligomer. Mostly monomeric in the absence of calcium. Forms higher oligomers in a calcium-dependent manner. Dimers associate to form tetramers, that then form linear homomer chains. Interacts with ASPH and TRDN. In terms of processing, phosphorylation in the C-terminus, probably by CK2, moderately increases calcium buffering capacity. Post-translationally, N-glycosylated.

Its subcellular location is the sarcoplasmic reticulum lumen. Calsequestrin is a high-capacity, moderate affinity, calcium-binding protein and thus acts as an internal calcium store in muscle. Calcium ions are bound by clusters of acidic residues at the protein surface, especially at the interface between subunits. Can bind around 60 Ca(2+) ions. Regulates the release of lumenal Ca(2+) via the calcium release channel RYR2; this plays an important role in triggering muscle contraction. Plays a role in excitation-contraction coupling in the heart and in regulating the rate of heart beats. The protein is Calsequestrin-2 (CASQ2) of Homo sapiens (Human).